The sequence spans 625 residues: tRNA (uracil-5-)-methyltransferase homolog A (625 aa).

Disordered stretches follow at residues 1–37 (MSEN…AAPA) and 145–165 (RPKA…EPPV). The span at 27-37 (PTVSVPPAAPA) shows a compositional bias: low complexity. An RRM domain is found at 73 to 146 (FKLELQNVPR…RPLSVRLARP (74 aa)). The stretch at 180–209 (YAEQLERKQLECEQVLQKLAKEIGSTNRAL) forms a coiled coil. S378 is modified (phosphoserine). Q411, E461, and D510 together coordinate S-adenosyl-L-methionine. The active-site Nucleophile is the C538. The active-site Proton acceptor is the E581. The segment at 594–625 (GTGVLGPHSPPAQPTPGPPDNTLQETGTFPSS) is disordered. The span at 601–612 (HSPPAQPTPGPP) shows a compositional bias: pro residues. A Phosphoserine modification is found at S602. A compositionally biased stretch (polar residues) spans 614–625 (NTLQETGTFPSS).

The protein belongs to the class I-like SAM-binding methyltransferase superfamily. RNA M5U methyltransferase family.

Its subcellular location is the cytoplasm. The protein resides in the cytosol. The catalysed reaction is uridine(54) in tRNA + S-adenosyl-L-methionine = 5-methyluridine(54) in tRNA + S-adenosyl-L-homocysteine + H(+). It carries out the reaction a uridine in mRNA + S-adenosyl-L-methionine = a 5-methyluridine in mRNA + S-adenosyl-L-homocysteine + H(+). Functionally, S-adenosyl-L-methionine-dependent methyltransferase that catalyzes the formation of 5-methyl-uridine in tRNAs and some mRNAs. Mainly catalyzes the methylation of uridine at position 54 (m5U54) in cytosolic tRNAs. Also able to mediate the formation of 5-methyl-uridine in some mRNAs. The chain is tRNA (uracil-5-)-methyltransferase homolog A from Homo sapiens (Human).